The following is a 159-amino-acid chain: Globin C, coelomic (159 aa).

Gly-2 is modified (N-acetylglycine). The Globin domain maps to 12–158 (DLTLAQKKIV…VQAVLLVKHG (147 aa)). Residues His-74 and His-105 each coordinate heme b.

The protein belongs to the globin family. As to quaternary structure, monomer.

The polypeptide is Globin C, coelomic (Molpadia arenicola (Sea cucumber)).